The primary structure comprises 1144 residues: Formin-like protein 18 (1144 aa).

The region spanning 17 to 193 (LEISERVYVF…QYISRRNVGS (177 aa)) is the Phosphatase tensin-type domain. Cys-126 serves as the catalytic Phosphocysteine intermediate. The C2 tensin-type domain maps to 199-338 (DQALTLDCVN…FSAEVIFSEM (140 aa)). 2 disordered regions span residues 429 to 463 (ISEN…SILK) and 482 to 729 (KIFS…KGRG). The segment covering 441–450 (SPEKEKDTMS) has biased composition (basic and acidic residues). Residues 491-522 (SPVTSPLPNRSPTQGSPASISRFHSSPSSLGI) are compositionally biased toward polar residues. The span at 526 to 536 (LHDHGSCKDEE) shows a compositional bias: basic and acidic residues. Residues 538–548 (TSSSPASPSIS) are compositionally biased toward low complexity. Positions 555 to 580 (PLTSSQPKKASPQCPQSPTPVHSNGP) are enriched in polar residues. Positions 603-613 (RPPPPPPPPPI) are enriched in pro residues. Over residues 614–629 (SSLRSTPSPSSTSNSI) the composition is skewed to low complexity. The segment covering 633–643 (GPPPPPPPPPL) has biased composition (pro residues). The span at 644–653 (QSHRSALSSS) shows a compositional bias: low complexity. The segment covering 669-678 (NPPPPPPPPL) has biased composition (pro residues). Residues 679–695 (HSNSRMGAPTSSLVLKS) are compositionally biased toward low complexity. The span at 696 to 705 (PPVPPPPAPA) shows a compositional bias: pro residues. The FH2 domain maps to 735-1135 (KGQGQTRKAN…RAQKEAENEK (401 aa)).

The protein belongs to the formin-like family. Class-II subfamily.

This is Formin-like protein 18 (FH18) from Arabidopsis thaliana (Mouse-ear cress).